The primary structure comprises 169 residues: NADH-quinone oxidoreductase subunit I (169 aa).

4Fe-4S ferredoxin-type domains are found at residues 60–90 and 100–129; these read LRRYPNGEERCIACKLCEVICPAQAIVIEAE and TRYDIDMIKCIYCGLCQEACPVDAIVEGPN. Residues cysteine 70, cysteine 73, cysteine 76, cysteine 80, cysteine 109, cysteine 112, cysteine 115, and cysteine 119 each contribute to the [4Fe-4S] cluster site.

It belongs to the complex I 23 kDa subunit family. As to quaternary structure, NDH-1 is composed of 14 different subunits. Subunits NuoA, H, J, K, L, M, N constitute the membrane sector of the complex. The cofactor is [4Fe-4S] cluster.

Its subcellular location is the cell membrane. It carries out the reaction a quinone + NADH + 5 H(+)(in) = a quinol + NAD(+) + 4 H(+)(out). In terms of biological role, NDH-1 shuttles electrons from NADH, via FMN and iron-sulfur (Fe-S) centers, to quinones in the respiratory chain. The immediate electron acceptor for the enzyme in this species is believed to be ubiquinone. Couples the redox reaction to proton translocation (for every two electrons transferred, four hydrogen ions are translocated across the cytoplasmic membrane), and thus conserves the redox energy in a proton gradient. The sequence is that of NADH-quinone oxidoreductase subunit I from Wolbachia pipientis wMel.